A 429-amino-acid chain; its full sequence is Enolase (429 aa).

Glutamine 166 lines the (2R)-2-phosphoglycerate pocket. Catalysis depends on glutamate 208, which acts as the Proton donor. Mg(2+) contacts are provided by aspartate 245, glutamate 289, and aspartate 316. Residues lysine 341, arginine 370, serine 371, and lysine 392 each coordinate (2R)-2-phosphoglycerate. The active-site Proton acceptor is the lysine 341.

This sequence belongs to the enolase family. As to quaternary structure, component of the RNA degradosome, a multiprotein complex involved in RNA processing and mRNA degradation. Requires Mg(2+) as cofactor.

It localises to the cytoplasm. The protein resides in the secreted. It is found in the cell surface. The enzyme catalyses (2R)-2-phosphoglycerate = phosphoenolpyruvate + H2O. It participates in carbohydrate degradation; glycolysis; pyruvate from D-glyceraldehyde 3-phosphate: step 4/5. Catalyzes the reversible conversion of 2-phosphoglycerate (2-PG) into phosphoenolpyruvate (PEP). It is essential for the degradation of carbohydrates via glycolysis. The sequence is that of Enolase from Acinetobacter baumannii (strain AB307-0294).